The primary structure comprises 650 residues: 1-deoxy-D-xylulose-5-phosphate synthase (650 aa).

Residues His73 and 114 to 116 (SHA) each bind thiamine diphosphate. A Mg(2+)-binding site is contributed by Asp145. Residues 146–147 (GA), Asn174, Tyr285, and Glu367 each bind thiamine diphosphate. A Mg(2+)-binding site is contributed by Asn174. Residues 631–650 (MGDEVGADESNQTPAGGGQA) form a disordered region.

This sequence belongs to the transketolase family. DXPS subfamily. Homodimer. The cofactor is Mg(2+). It depends on thiamine diphosphate as a cofactor.

The catalysed reaction is D-glyceraldehyde 3-phosphate + pyruvate + H(+) = 1-deoxy-D-xylulose 5-phosphate + CO2. Its pathway is metabolic intermediate biosynthesis; 1-deoxy-D-xylulose 5-phosphate biosynthesis; 1-deoxy-D-xylulose 5-phosphate from D-glyceraldehyde 3-phosphate and pyruvate: step 1/1. Functionally, catalyzes the acyloin condensation reaction between C atoms 2 and 3 of pyruvate and glyceraldehyde 3-phosphate to yield 1-deoxy-D-xylulose-5-phosphate (DXP). The chain is 1-deoxy-D-xylulose-5-phosphate synthase from Parafrankia sp. (strain EAN1pec).